We begin with the raw amino-acid sequence, 322 residues long: MSKTYIGIDIAKNTFDACFIAHNTWQNCTFTNNQQGFMELTLWIQAHHYNTSTLHLIIEATGTYWEKLAHWAISHHHKVSIVNPLYIHAYAKSLGIRTKTDKQDAILLARYGAKENPPLWQPKSDNEIKLTALLKQREHHKRQLIKERTRQEALSIYVKSYTDDNIRHWSDSITQLDHQIWQLINCTPELNHRASLLATIPGIGKKTLPHLLVAIGDGSSFQSAKHLASYAGLAPRHHQSGISIHKQSSIGFSGQKELRSALFMPAVIVSFGRYPAFQKFVKRMEQKGKTKKQIIIAIMRKLLTISYAVIRQNRPFDKRIHE.

Its function is as follows. May be the site-specific invertase required for pilin gene inversion. Moraxella can express either a Q or I pilin; the inversion of 2 kb of DNA determines which pilin is expressed. This Moraxella bovis protein is Pilin gene-inverting protein (piv).